We begin with the raw amino-acid sequence, 135 residues long: Antennal-specific protein OS-C (135 aa).

The N-terminal stretch at 1 to 27 is a signal peptide; that stretch reads MGFHMGRQLLLSGFLLVMLQMVTQTQA. Positions 43–84 are disordered; sequence VIKREGDDDGDDDDSSSEETVEDSEESRRRRREVNTDNTPSA. Positions 49 to 67 are enriched in acidic residues; that stretch reads DDDGDDDDSSSEETVEDSE.

As to expression, antenna. In the third antennal segment. Expressed in sencilla coeloconica.

The polypeptide is Antennal-specific protein OS-C (Os-C) (Drosophila melanogaster (Fruit fly)).